A 451-amino-acid polypeptide reads, in one-letter code: Putative metabolite transport protein YyaJ (451 aa).

At 1–29 the chain is on the cytoplasmic side; sequence MNTIFKQKNTHPFSNAANRLDRLPISRVH. Residues 30 to 50 traverse the membrane as a helical segment; sequence FQVLTALGIVYFFDLADLFTL. Residues 51 to 60 are Extracellular-facing; sequence SNVAPALIEH. A helical membrane pass occupies residues 61 to 81; that stretch reads WGIPLSTIANVTAASFLGMFL. At 82 to 97 the chain is on the cytoplasmic side; that stretch reads GASLGGRLSDRIGRKK. A helical transmembrane segment spans residues 98–118; it reads ALNLFVFVFSIASLCNAAAWD. Residues 119–124 lie on the Extracellular side of the membrane; the sequence is IPSLMT. The chain crosses the membrane as a helical span at residues 125–145; it reads FRFLTGFGVAAAMVITNSYLA. At 146–157 the chain is on the cytoplasmic side; the sequence is EFFPSSVRGKYI. A helical membrane pass occupies residues 158 to 178; sequence SFCAMIGLIGVPITNIVSAFV. Topologically, residues 179 to 182 are extracellular; sequence IPLG. The chain crosses the membrane as a helical span at residues 183–203; sequence SWGWRLVFVWGAVGLIYFFFI. Residues 204 to 270 lie on the Cytoplasmic side of the membrane; sequence HRLEESPRWH…LLKGRNLKIT (67 aa). A helical transmembrane segment spans residues 271-291; it reads IVLSAVWIFETFGFYGFASWV. The Extracellular segment spans residues 292-305; sequence PSLLKSNGVTMENT. A helical transmembrane segment spans residues 306-326; that stretch reads LWYNVLHSVGAPLGALLGSMI. Residues 327–333 lie on the Cytoplasmic side of the membrane; it reads SERFQRK. A helical transmembrane segment spans residues 334–354; the sequence is WILAASAFLTAIAGLLYGMTF. Topologically, residues 355-357 are extracellular; it reads IPI. The helical transmembrane segment at 358 to 378 threads the bilayer; it reads MIIVFGFIVNITERVFTSNLY. The Cytoplasmic portion of the chain corresponds to 379 to 396; that stretch reads AYTSEPYPTEYRSSGSGL. The chain crosses the membrane as a helical span at residues 397–417; that stretch reads AYGLGRFSNIFGSLLVGFIAV. Residues 418–421 are Extracellular-facing; that stretch reads QLGY. The helical transmembrane segment at 422 to 442 threads the bilayer; sequence ISVFLFIGGCWLACSLLLIFF. Residues 443–451 are Cytoplasmic-facing; it reads GPNTNAKQI.

The protein belongs to the major facilitator superfamily. Sugar transporter (TC 2.A.1.1) family.

It localises to the cell membrane. The sequence is that of Putative metabolite transport protein YyaJ (yyaJ) from Bacillus subtilis (strain 168).